The following is a 329-amino-acid chain: 4-hydroxythreonine-4-phosphate dehydrogenase (329 aa).

Substrate is bound by residues H136 and T137. H166, H211, and H266 together coordinate a divalent metal cation. 3 residues coordinate substrate: K274, N283, and R292.

The protein belongs to the PdxA family. As to quaternary structure, homodimer. The cofactor is Zn(2+). Mg(2+) serves as cofactor. It depends on Co(2+) as a cofactor.

The protein localises to the cytoplasm. The catalysed reaction is 4-(phosphooxy)-L-threonine + NAD(+) = 3-amino-2-oxopropyl phosphate + CO2 + NADH. Its pathway is cofactor biosynthesis; pyridoxine 5'-phosphate biosynthesis; pyridoxine 5'-phosphate from D-erythrose 4-phosphate: step 4/5. Functionally, catalyzes the NAD(P)-dependent oxidation of 4-(phosphooxy)-L-threonine (HTP) into 2-amino-3-oxo-4-(phosphooxy)butyric acid which spontaneously decarboxylates to form 3-amino-2-oxopropyl phosphate (AHAP). The chain is 4-hydroxythreonine-4-phosphate dehydrogenase from Escherichia coli O7:K1 (strain IAI39 / ExPEC).